We begin with the raw amino-acid sequence, 295 residues long: Threonine/homoserine exporter RhtA (295 aa).

Residues 1-7 are Cytoplasmic-facing; it reads MPGSTRK. Residues 8–28 traverse the membrane as a helical segment; it reads LPVWLPILVLLIAMSSIQSGA. Residues 29 to 38 are Periplasmic-facing; it reads SLAKSLFPLV. Positions 30–135 constitute an EamA 1 domain; the sequence is LAKSLFPLVG…VLAVLGLWFL (106 aa). The helical transmembrane segment at 39 to 59 threads the bilayer; the sequence is GAPGVTALRLALGTLILIAFF. The Cytoplasmic segment spans residues 60-71; the sequence is KPWRLRFAKEQR. A helical transmembrane segment spans residues 72-92; sequence LPLLFYGLSLGGMNYLFYLSI. Position 93 (Gln-93) is a topological domain, periplasmic. Residues 94 to 114 form a helical membrane-spanning segment; that stretch reads TVPLGIAVALEFTGPLAVALF. Residues 115-118 are Cytoplasmic-facing; that stretch reads SSRR. The helical transmembrane segment at 119-139 threads the bilayer; that stretch reads PVDFIWVVLAVLGLWFLLPLG. The Periplasmic portion of the chain corresponds to 140 to 146; the sequence is QDMSHVD. A helical transmembrane segment spans residues 147–167; it reads LTGAALALGAGACWAVYILTG. In terms of domain architecture, EamA 2 spans 159–278; the sequence is CWAVYILTGQ…LCAIIAASMG (120 aa). Over 168–175 the chain is Cytoplasmic; sequence QRAGAEHG. A helical transmembrane segment spans residues 176–196; it reads PATVAVGSLIAAIIFVPIGAV. The Periplasmic segment spans residues 197-200; the sequence is QAGD. Residues 201-221 traverse the membrane as a helical segment; sequence ALWHWSILPLGLAVAVLSTAL. Residues 222 to 237 are Cytoplasmic-facing; sequence PYSLEMIALTRLPTRT. The chain crosses the membrane as a helical span at residues 238–258; the sequence is FGTLMSMEPALAAVSGMIFLG. The Periplasmic segment spans residues 259–262; that stretch reads ETLT. A helical transmembrane segment spans residues 263–283; that stretch reads GIQILALCAIIAASMGSTLTI. Topologically, residues 284-295 are cytoplasmic; sequence RREPQIKQVDVK.

The protein belongs to the drug/metabolite transporter (DMT) superfamily. 10 TMS drug/metabolite exporter (DME) (TC 2.A.7.3) family.

The protein resides in the cell inner membrane. Its function is as follows. Involved in the efflux of threonine and homoserine. This is Threonine/homoserine exporter RhtA (rhtA) from Salmonella typhimurium (strain SL1344).